Here is a 340-residue protein sequence, read N- to C-terminus: Ribosomal RNA small subunit methyltransferase C (340 aa).

Belongs to the methyltransferase superfamily. RsmC family. Monomer.

The protein localises to the cytoplasm. The enzyme catalyses guanosine(1207) in 16S rRNA + S-adenosyl-L-methionine = N(2)-methylguanosine(1207) in 16S rRNA + S-adenosyl-L-homocysteine + H(+). In terms of biological role, specifically methylates the guanine in position 1207 of 16S rRNA in the 30S particle. The chain is Ribosomal RNA small subunit methyltransferase C from Vibrio cholerae serotype O1 (strain ATCC 39541 / Classical Ogawa 395 / O395).